Here is a 689-residue protein sequence, read N- to C-terminus: Centrosomal protein of 78 kDa (689 aa).

Ser-325 and Ser-327 each carry phosphoserine. 3 disordered regions span residues 432–451 (SSEV…VPEK), 563–589 (PQMT…EPKQ), and 614–689 (DSFP…TESH). The stretch at 450-505 (EKTSIEQEALQEKLEECLKQLKEERVIRLKVDKRVSELEHENAQLRNINFSLSEAL) forms a coiled coil. Basic and acidic residues-rich tracts occupy residues 573 to 587 (PKEE…KPEP) and 666 to 689 (QRKE…TESH).

Belongs to the CEP78 family. In terms of assembly, interacts with PLK4. Interacts with FAM161A. Interacts with IFT20; regulating IFT20 stability and localization. Interacts with TTC21A; regulating TTC21A stability and localization. Interacts with USP16; promoting USP16-dependent deubiquitination of tektins. Interacts with DCAF1/VPRBP; promoting localization of the EDVP complex to centrosomes. Interacts with CEP350; promoting CEP78 localization to centrosome and centriole. As to expression, widely expressed. Expressed in different retinal cell types with higher expression in cone compared to rod cells (at protein level).

The protein resides in the cytoplasm. Its subcellular location is the cytoskeleton. The protein localises to the microtubule organizing center. It is found in the centrosome. It localises to the centriole. The protein resides in the cilium basal body. Centriole wall protein that localizes to mature centrioles and regulates centriole and cilia biogenesis. Involved in centrosome duplication: required for efficient PLK4 centrosomal localization and PLK4-induced overduplication of centrioles. Involved in cilium biogenesis and controls cilium length. Acts as a regulator of protein stability by preventing ubiquitination of centrosomal proteins, such as CCP110 and tektins. Associates with the EDVP complex, preventing ubiquitination and degradation of CCP110. Promotes deubiquitination of tektin proteins (TEKT1, TEKT2, TEK3, TEKT4 and TEKT5) via its interaction with USP16. The sequence is that of Centrosomal protein of 78 kDa from Homo sapiens (Human).